The chain runs to 310 residues: p-hydroxybenzoic acid efflux pump subunit AaeA (310 aa).

The chain crosses the membrane as a helical span at residues 12 to 32; that stretch reads AITVVLVILAFIAIFNAWVYY.

The protein belongs to the membrane fusion protein (MFP) (TC 8.A.1) family.

It localises to the cell inner membrane. Functionally, forms an efflux pump with AaeB. The sequence is that of p-hydroxybenzoic acid efflux pump subunit AaeA from Shigella flexneri.